The sequence spans 336 residues: MAPKVGINGFGRIGRIVFRNAINHGEVDVVAVNDPFIETHYAAYMLKYDSTHGQFKGTIETYEEGLIVNGKKIRFFAERDPAAIPWGTTGADYIVESTGVFTTQEKAAAHLKGGAKKVVISAPSADAPMFVMGVNNTSYTKDINVLSNASCTTNCLAPLAKVINDKFGIVEGLMTTVHSYTATQKVVDAPSSKDWRGGRTAAQNIIPSSTGAAKAVGKVIPTLNGKLTGMAMRVPTSNVSVVDLTCRLEKATSYDEIKKALKDASENELKGILGYTEDDIVSSDLNGDDHSSIFDAKAGIALNSNFVKLVSWYDNEWGYSRRVVDLIAYISKVDAQ.

NAD(+) contacts are provided by residues 12-13, D34, and R79; that span reads RI. D-glyceraldehyde 3-phosphate-binding positions include 150-152, T181, 210-211, and R233; these read SCT and TG. C151 (nucleophile) is an active-site residue. Residue N315 coordinates NAD(+).

Belongs to the glyceraldehyde-3-phosphate dehydrogenase family. In terms of assembly, homotetramer.

The protein localises to the cytoplasm. It catalyses the reaction D-glyceraldehyde 3-phosphate + phosphate + NAD(+) = (2R)-3-phospho-glyceroyl phosphate + NADH + H(+). Its pathway is carbohydrate degradation; glycolysis; pyruvate from D-glyceraldehyde 3-phosphate: step 1/5. The chain is Glyceraldehyde-3-phosphate dehydrogenase (gpdA) from Aspergillus niger.